The primary structure comprises 547 residues: Chaperonin GroEL 2 (547 aa).

Residues 30–33 (TLGP), Lys-51, 87–91 (DGTTT), Gly-415, and Asp-496 each bind ATP.

The protein belongs to the chaperonin (HSP60) family. Forms a cylinder of 14 subunits composed of two heptameric rings stacked back-to-back. Interacts with the co-chaperonin GroES.

Its subcellular location is the cytoplasm. It catalyses the reaction ATP + H2O + a folded polypeptide = ADP + phosphate + an unfolded polypeptide.. Functionally, together with its co-chaperonin GroES, plays an essential role in assisting protein folding. The GroEL-GroES system forms a nano-cage that allows encapsulation of the non-native substrate proteins and provides a physical environment optimized to promote and accelerate protein folding. The protein is Chaperonin GroEL 2 of Rhodopseudomonas palustris (strain ATCC BAA-98 / CGA009).